Consider the following 336-residue polypeptide: F420-dependent glucose-6-phosphate dehydrogenase (336 aa).

D39 is a coenzyme F420-(gamma-Glu)n binding site. Residue H40 is the Proton donor of the active site. Residues T76 and 107 to 108 (SG) contribute to the coenzyme F420-(gamma-Glu)n site. E109 serves as the catalytic Proton acceptor. Residues N112, 177 to 178 (GG), and 180 to 181 (VV) each bind coenzyme F420-(gamma-Glu)n. Residues T195, K198, K259, and R283 each coordinate substrate.

This sequence belongs to the F420-dependent glucose-6-phosphate dehydrogenase family. As to quaternary structure, homodimer.

The catalysed reaction is oxidized coenzyme F420-(gamma-L-Glu)(n) + D-glucose 6-phosphate + H(+) = 6-phospho-D-glucono-1,5-lactone + reduced coenzyme F420-(gamma-L-Glu)(n). Catalyzes the coenzyme F420-dependent oxidation of glucose 6-phosphate (G6P) to 6-phosphogluconolactone. The polypeptide is F420-dependent glucose-6-phosphate dehydrogenase (Tsukamurella paurometabola (strain ATCC 8368 / DSM 20162 / CCUG 35730 / CIP 100753 / JCM 10117 / KCTC 9821 / NBRC 16120 / NCIMB 702349 / NCTC 13040) (Corynebacterium paurometabolum)).